The chain runs to 416 residues: Gamma-glutamyl phosphate reductase (416 aa).

It belongs to the gamma-glutamyl phosphate reductase family.

It is found in the cytoplasm. The catalysed reaction is L-glutamate 5-semialdehyde + phosphate + NADP(+) = L-glutamyl 5-phosphate + NADPH + H(+). Its pathway is amino-acid biosynthesis; L-proline biosynthesis; L-glutamate 5-semialdehyde from L-glutamate: step 2/2. Catalyzes the NADPH-dependent reduction of L-glutamate 5-phosphate into L-glutamate 5-semialdehyde and phosphate. The product spontaneously undergoes cyclization to form 1-pyrroline-5-carboxylate. This chain is Gamma-glutamyl phosphate reductase, found in Leptospira borgpetersenii serovar Hardjo-bovis (strain JB197).